The chain runs to 189 residues: FAS1 domain-containing protein mug57 (189 aa).

An N-terminal signal peptide occupies residues 1-24 (MMKLFCLNIFRFLYTTSFISAVLS). The 146-residue stretch at 37–182 (EPRLFELLAE…GEMWVLNATL (146 aa)) folds into the FAS1 domain.

It is found in the cytoplasm. It localises to the nucleus. The protein resides in the membrane. Its function is as follows. Has a role in sporulation. This is FAS1 domain-containing protein mug57 (mug57) from Schizosaccharomyces pombe (strain 972 / ATCC 24843) (Fission yeast).